A 418-amino-acid chain; its full sequence is Tyrosine--tRNA ligase (418 aa).

A 'HIGH' region motif is present at residues 42-51 (PTSPDLHLGH). Residues 226 to 230 (KMSKS) carry the 'KMSKS' region motif. K229 is a binding site for ATP. Residues 339–400 (VRLVALLTKS…GKRNFIKVRL (62 aa)) form the S4 RNA-binding domain.

Belongs to the class-I aminoacyl-tRNA synthetase family. TyrS type 2 subfamily. In terms of assembly, homodimer.

Its subcellular location is the cytoplasm. The catalysed reaction is tRNA(Tyr) + L-tyrosine + ATP = L-tyrosyl-tRNA(Tyr) + AMP + diphosphate + H(+). In terms of biological role, catalyzes the attachment of tyrosine to tRNA(Tyr) in a two-step reaction: tyrosine is first activated by ATP to form Tyr-AMP and then transferred to the acceptor end of tRNA(Tyr). The protein is Tyrosine--tRNA ligase of Xylella fastidiosa (strain Temecula1 / ATCC 700964).